Here is a 235-residue protein sequence, read N- to C-terminus: Large ribosomal subunit protein uL1 (235 aa).

Belongs to the universal ribosomal protein uL1 family. Part of the 50S ribosomal subunit.

Functionally, binds directly to 23S rRNA. The L1 stalk is quite mobile in the ribosome, and is involved in E site tRNA release. Its function is as follows. Protein L1 is also a translational repressor protein, it controls the translation of the L11 operon by binding to its mRNA. The sequence is that of Large ribosomal subunit protein uL1 from Prochlorococcus marinus subsp. pastoris (strain CCMP1986 / NIES-2087 / MED4).